Here is a 480-residue protein sequence, read N- to C-terminus: Protein nucleotidyltransferase YdiU (480 aa).

Positions 84, 86, 87, 107, 119, 120, 170, and 177 each coordinate ATP. The Proton acceptor role is filled by D246. Mg(2+) is bound by residues N247 and D256. D256 contacts ATP.

It belongs to the SELO family. It depends on Mg(2+) as a cofactor. Requires Mn(2+) as cofactor.

It catalyses the reaction L-seryl-[protein] + ATP = 3-O-(5'-adenylyl)-L-seryl-[protein] + diphosphate. The catalysed reaction is L-threonyl-[protein] + ATP = 3-O-(5'-adenylyl)-L-threonyl-[protein] + diphosphate. The enzyme catalyses L-tyrosyl-[protein] + ATP = O-(5'-adenylyl)-L-tyrosyl-[protein] + diphosphate. It carries out the reaction L-histidyl-[protein] + UTP = N(tele)-(5'-uridylyl)-L-histidyl-[protein] + diphosphate. It catalyses the reaction L-seryl-[protein] + UTP = O-(5'-uridylyl)-L-seryl-[protein] + diphosphate. The catalysed reaction is L-tyrosyl-[protein] + UTP = O-(5'-uridylyl)-L-tyrosyl-[protein] + diphosphate. Nucleotidyltransferase involved in the post-translational modification of proteins. It can catalyze the addition of adenosine monophosphate (AMP) or uridine monophosphate (UMP) to a protein, resulting in modifications known as AMPylation and UMPylation. This chain is Protein nucleotidyltransferase YdiU, found in Pseudoalteromonas atlantica (strain T6c / ATCC BAA-1087).